The sequence spans 420 residues: Glutamyl-tRNA reductase (420 aa).

Substrate contacts are provided by residues 49-52 (TCNR), serine 109, 114-116 (EPQ), and glutamine 120. Cysteine 50 serves as the catalytic Nucleophile. 189–194 (GAGETI) lines the NADP(+) pocket.

It belongs to the glutamyl-tRNA reductase family. Homodimer.

It catalyses the reaction (S)-4-amino-5-oxopentanoate + tRNA(Glu) + NADP(+) = L-glutamyl-tRNA(Glu) + NADPH + H(+). The protein operates within porphyrin-containing compound metabolism; protoporphyrin-IX biosynthesis; 5-aminolevulinate from L-glutamyl-tRNA(Glu): step 1/2. In terms of biological role, catalyzes the NADPH-dependent reduction of glutamyl-tRNA(Glu) to glutamate 1-semialdehyde (GSA). In Yersinia enterocolitica serotype O:8 / biotype 1B (strain NCTC 13174 / 8081), this protein is Glutamyl-tRNA reductase.